We begin with the raw amino-acid sequence, 172 residues long: Large ribosomal subunit protein uL10 (172 aa).

It belongs to the universal ribosomal protein uL10 family. Part of the ribosomal stalk of the 50S ribosomal subunit. The N-terminus interacts with L11 and the large rRNA to form the base of the stalk. The C-terminus forms an elongated spine to which L12 dimers bind in a sequential fashion forming a multimeric L10(L12)X complex.

Functionally, forms part of the ribosomal stalk, playing a central role in the interaction of the ribosome with GTP-bound translation factors. This chain is Large ribosomal subunit protein uL10, found in Leifsonia xyli subsp. xyli (strain CTCB07).